The primary structure comprises 679 residues: Translation initiation factor IF-2 (679 aa).

Residues 178 to 347 (KRPPIITVMG…LLTSEMQELK (170 aa)) enclose the tr-type G domain. The interval 187 to 194 (GHVDHGKT) is G1. 187 to 194 (GHVDHGKT) contributes to the GTP binding site. The tract at residues 212 to 216 (GITQH) is G2. Residues 233–236 (DTPG) are G3. Residues 233-237 (DTPGH) and 287-290 (NKMD) each bind GTP. Residues 287 to 290 (NKMD) are G4. The interval 323-325 (SAK) is G5.

It belongs to the TRAFAC class translation factor GTPase superfamily. Classic translation factor GTPase family. IF-2 subfamily.

It localises to the cytoplasm. In terms of biological role, one of the essential components for the initiation of protein synthesis. Protects formylmethionyl-tRNA from spontaneous hydrolysis and promotes its binding to the 30S ribosomal subunits. Also involved in the hydrolysis of GTP during the formation of the 70S ribosomal complex. In Clostridium perfringens (strain ATCC 13124 / DSM 756 / JCM 1290 / NCIMB 6125 / NCTC 8237 / Type A), this protein is Translation initiation factor IF-2.